The sequence spans 426 residues: Histone-binding protein RBBP7 (426 aa).

WD repeat units follow at residues 47–123 (QWLP…KINH), 129–174 (RARY…LRLR), 182–218 (GLSWNPNLSGNLLSASDDHTICLWDISGAPKEGKIVD), 229–270 (VVED…HSVD), 276–313 (VNCLSFNPYSEFILATGSADKTVALWDLRNLKLKLHSF), 319–370 (EIFQ…LFIH), and 377–404 (ISDFSWNPNEPWVICSVSEDNIMQVWQM).

The protein belongs to the WD repeat RBAP46/RBAP48/MSI1 family. As to quaternary structure, binds directly to helix 1 of the histone fold of histone H4, a region that is not accessible when H4 is in chromatin.

The protein resides in the nucleus. In terms of biological role, core histone-binding subunit that may target chromatin remodeling factors, histone acetyltransferases and histone deacetylases to their histone substrates in a manner that is regulated by nucleosomal DNA. Component of several complexes which regulate chromatin metabolism. The chain is Histone-binding protein RBBP7 (rbbp7) from Danio rerio (Zebrafish).